Here is a 792-residue protein sequence, read N- to C-terminus: Phenylalanine--tRNA ligase beta subunit (792 aa).

The 111-residue stretch at 38-148 (NTKLAGFIVA…DDYKVGNKFF (111 aa)) folds into the tRNA-binding domain. One can recognise a B5 domain in the interval 406 to 482 (EADTKVSFDY…RIYGYDKIKE (77 aa)). Positions 460, 466, 469, and 470 each coordinate Mg(2+). The 93-residue stretch at 698–790 (YKHQSVKRDF…VHKNTGGILR (93 aa)) folds into the FDX-ACB domain.

It belongs to the phenylalanyl-tRNA synthetase beta subunit family. Type 1 subfamily. In terms of assembly, tetramer of two alpha and two beta subunits. The cofactor is Mg(2+).

It localises to the cytoplasm. The enzyme catalyses tRNA(Phe) + L-phenylalanine + ATP = L-phenylalanyl-tRNA(Phe) + AMP + diphosphate + H(+). The chain is Phenylalanine--tRNA ligase beta subunit from Wolbachia sp. subsp. Brugia malayi (strain TRS).